Consider the following 466-residue polypeptide: Putative outer membrane protein NMB0088 (466 aa).

The N-terminal stretch at 1–24 is a signal peptide; that stretch reads MTPSALKKTVLLLGTAFAAASVHA.

This sequence belongs to the OmpP1/FadL family.

It is found in the cell outer membrane. This is Putative outer membrane protein NMB0088 from Neisseria meningitidis serogroup B (strain ATCC BAA-335 / MC58).